The sequence spans 655 residues: Chaperone protein DnaK 3 (655 aa).

At threonine 197 the chain carries Phosphothreonine; by autocatalysis.

Belongs to the heat shock protein 70 family.

Functionally, acts as a chaperone. The chain is Chaperone protein DnaK 3 from Synechococcus sp. (strain ATCC 27144 / PCC 6301 / SAUG 1402/1) (Anacystis nidulans).